The chain runs to 88 residues: Small ribosomal subunit protein bS16 (88 aa).

This sequence belongs to the bacterial ribosomal protein bS16 family.

In Leptospira interrogans serogroup Icterohaemorrhagiae serovar Lai (strain 56601), this protein is Small ribosomal subunit protein bS16.